The following is a 77-amino-acid chain: TSC22 domain family protein 3 (77 aa).

Met1 carries the post-translational modification N-acetylmethionine. The interval 19 to 40 (LKEQIRELVEKNSQLERENTLL) is leucine-zipper. The disordered stretch occupies residues 41–77 (KTLASPEQLEKFQSRLSPEEPAPETPEAPEAPGGSAV). Phosphoserine is present on Ser45. Low complexity predominate over residues 68 to 77 (APEAPGGSAV).

It belongs to the TSC-22/Dip/Bun family. As to quaternary structure, can form homodimers, however it is likely to function as a monomer. Interacts with AP1 and NFKB1. Interacts with MYOD1. Interacts with HDAC1; this interaction affects HDAC1 activity on MYOG promoter and thus inhibits MYOD1 transcriptional activity.

Its subcellular location is the cytoplasm. The protein localises to the nucleus. Protects T-cells from IL2 deprivation-induced apoptosis through the inhibition of FOXO3A transcriptional activity that leads to the down-regulation of the pro-apoptotic factor BCL2L11. In macrophages, plays a role in the anti-inflammatory and immunosuppressive effects of glucocorticoids and IL10. In T-cells, inhibits anti-CD3-induced NFKB1 nuclear translocation. In vitro, suppresses AP1 and NFKB1 DNA-binding activities. Inhibits myogenic differentiation and mediates anti-myogenic effects of glucocorticoids by binding and regulating MYOD1 and HDAC1 transcriptional activity resulting in reduced expression of MYOG. The protein is TSC22 domain family protein 3 (TSC22D3) of Sus scrofa (Pig).